A 652-amino-acid chain; its full sequence is 2-oxoglutarate carboxylase large subunit (652 aa).

Positions 26-288 (ILITDLTPRD…DTGIDMKKLD (263 aa)) constitute a Pyruvate carboxyltransferase domain. Substrate is bound by residues 34 to 38 (RDGQQ) and arginine 105. Aspartate 35 serves as a coordination point for a divalent metal cation. A divalent metal cation-binding residues include lysine 196, histidine 227, and histidine 229. The residue at position 196 (lysine 196) is an N6-carboxylysine. Threonine 362 is a binding site for substrate. One can recognise a Biotinyl-binding domain in the interval 563 to 643 (AEEKGIPKAT…TPDDALLRIK (81 aa)). Residue lysine 609 is modified to N6-biotinyllysine.

In terms of assembly, heterohexadecamer of 8 large subunits and 8 small subunits. Requires Mg(2+) as cofactor. Mn(2+) serves as cofactor. The cofactor is Co(2+). In terms of processing, biotinylated.

It carries out the reaction hydrogencarbonate + 2-oxoglutarate + ATP = (S)-oxalosuccinate + ADP + phosphate + H(+). This chain is 2-oxoglutarate carboxylase large subunit, found in Hydrogenobacter thermophilus (strain DSM 6534 / IAM 12695 / TK-6).